Here is a 55-residue protein sequence, read N- to C-terminus: Small ribosomal subunit protein uS14 (55 aa).

Residues C20, C23, C38, and C41 each coordinate Zn(2+).

This sequence belongs to the universal ribosomal protein uS14 family. Requires Zn(2+) as cofactor.

The protein is Small ribosomal subunit protein uS14 (rps29) of Dictyostelium discoideum (Social amoeba).